Here is a 554-residue protein sequence, read N- to C-terminus: Zinc finger protein syd-9 (554 aa).

3 C2H2-type zinc fingers span residues L20–H43, F65–H87, and Y93–H116. 3 disordered regions span residues K136–P158, S298–A319, and A342–P383. Residues N142–P158 show a composition bias toward low complexity. Polar residues-rich tracts occupy residues P351–C360 and S370–S379. The C2H2-type 4 zinc-finger motif lies at L387 to H410. A disordered region spans residues R516 to L554. Over residues S544–L554 the composition is skewed to basic and acidic residues.

As to expression, expressed mainly in body wall muscles and ventral cord motoneurons.

Its subcellular location is the nucleus. It is found in the nucleus speckle. In terms of biological role, plays a role in regulating synaptic function, probably by modulation of endocytosis. May be dispensable in muscle for normal locomotion. May be involved in post-transcriptional mRNA processing, in parallel with unc-75. This Caenorhabditis elegans protein is Zinc finger protein syd-9.